The primary structure comprises 365 residues: tRNA-specific 2-thiouridylase MnmA (365 aa).

ATP contacts are provided by residues 6-13 and Met32; that span reads AMSGGVDS. Residue Cys101 is the Nucleophile of the active site. A disulfide bridge connects residues Cys101 and Cys199. ATP is bound at residue Gly125. Residues 148 to 150 are interaction with tRNA; that stretch reads KDQ. Cys199 functions as the Cysteine persulfide intermediate in the catalytic mechanism.

It belongs to the MnmA/TRMU family.

The protein resides in the cytoplasm. The catalysed reaction is S-sulfanyl-L-cysteinyl-[protein] + uridine(34) in tRNA + AH2 + ATP = 2-thiouridine(34) in tRNA + L-cysteinyl-[protein] + A + AMP + diphosphate + H(+). Catalyzes the 2-thiolation of uridine at the wobble position (U34) of tRNA, leading to the formation of s(2)U34. The chain is tRNA-specific 2-thiouridylase MnmA from Kineococcus radiotolerans (strain ATCC BAA-149 / DSM 14245 / SRS30216).